A 1210-amino-acid chain; its full sequence is Disease resistance-like protein DSC2 (1210 aa).

The region spanning 59 to 223 (WTHQVFPSFR…KVAKDVSDVL (165 aa)) is the TIR domain. E134 is an active-site residue. Residues 241–511 (ITRINSLLCL…CLFNGCQVNH (271 aa)) form the NB-ARC domain. LRR repeat units lie at residues 662–685 (AKFL…IQPL), 686–709 (KNLK…SNAT), 711–732 (LESL…IRGT), 756–780 (ATSL…LPGD), 783–804 (MRSL…PEIS), 805–828 (TNIQ…RLWS), 830–848 (LDKL…PPVP), 849–873 (DGIS…NLSQ), and 940–970 (LPEL…NLSQ).

Belongs to the disease resistance NB-LRR family. In terms of assembly, interacts with DSC1.

It catalyses the reaction NAD(+) + H2O = ADP-D-ribose + nicotinamide + H(+). Its function is as follows. TIR-NB-LRR receptor-like protein involved in plant defense. Acts as a trigger of hypersensitive response (HR). Functions as a guard of CAMTA3, a negative regulator of immunity, during pathogen infection. The polypeptide is Disease resistance-like protein DSC2 (Arabidopsis thaliana (Mouse-ear cress)).